The chain runs to 261 residues: 3-methyl-2-oxobutanoate hydroxymethyltransferase (261 aa).

2 residues coordinate Mg(2+): Asp47 and Asp86. Residues 47–48 (DS), Asp86, and Lys116 each bind 3-methyl-2-oxobutanoate. Glu118 lines the Mg(2+) pocket. Glu186 functions as the Proton acceptor in the catalytic mechanism.

Belongs to the PanB family. In terms of assembly, homodecamer; pentamer of dimers. Mg(2+) is required as a cofactor.

It is found in the cytoplasm. It catalyses the reaction 3-methyl-2-oxobutanoate + (6R)-5,10-methylene-5,6,7,8-tetrahydrofolate + H2O = 2-dehydropantoate + (6S)-5,6,7,8-tetrahydrofolate. It functions in the pathway cofactor biosynthesis; (R)-pantothenate biosynthesis; (R)-pantoate from 3-methyl-2-oxobutanoate: step 1/2. Catalyzes the reversible reaction in which hydroxymethyl group from 5,10-methylenetetrahydrofolate is transferred onto alpha-ketoisovalerate to form ketopantoate. This Thermosynechococcus vestitus (strain NIES-2133 / IAM M-273 / BP-1) protein is 3-methyl-2-oxobutanoate hydroxymethyltransferase.